The following is a 215-amino-acid chain: Myelin protein zero-like protein 2 (215 aa).

The first 26 residues, Met-1–Ala-26, serve as a signal peptide directing secretion. The 115-residue stretch at Val-27–Ser-141 folds into the Ig-like V-type domain. Topologically, residues Val-27 to Leu-154 are extracellular. Residues Asn-39 and Asn-118 are each glycosylated (N-linked (GlcNAc...) asparagine). Cys-47 and Cys-123 are joined by a disulfide. The helical transmembrane segment at Ala-155–Phe-175 threads the bilayer. The Cytoplasmic portion of the chain corresponds to Gln-176–Asp-215.

Belongs to the myelin P0 protein family.

It localises to the membrane. In terms of biological role, mediates homophilic cell-cell adhesion. The polypeptide is Myelin protein zero-like protein 2 (MPZL2) (Bos taurus (Bovine)).